We begin with the raw amino-acid sequence, 636 residues long: Threonine--tRNA ligase (636 aa).

A TGS domain is found at 1-63 (MSSISIALPD…KDDSRVEIIT (63 aa)). The tract at residues 243–534 (DHRRLGRELD…LIEHYAGNFP (292 aa)) is catalytic. Residues Cys335, His386, and His511 each coordinate Zn(2+).

The protein belongs to the class-II aminoacyl-tRNA synthetase family. As to quaternary structure, homodimer. Requires Zn(2+) as cofactor.

Its subcellular location is the cytoplasm. It carries out the reaction tRNA(Thr) + L-threonine + ATP = L-threonyl-tRNA(Thr) + AMP + diphosphate + H(+). Functionally, catalyzes the attachment of threonine to tRNA(Thr) in a two-step reaction: L-threonine is first activated by ATP to form Thr-AMP and then transferred to the acceptor end of tRNA(Thr). Also edits incorrectly charged L-seryl-tRNA(Thr). In Pelobacter propionicus (strain DSM 2379 / NBRC 103807 / OttBd1), this protein is Threonine--tRNA ligase.